The chain runs to 289 residues: Inorganic pyrophosphatase (289 aa).

R80 is a binding site for diphosphate. Mg(2+) contacts are provided by D117, D122, and D154.

This sequence belongs to the PPase family. Homodimer. It depends on Mg(2+) as a cofactor.

The protein resides in the cytoplasm. The enzyme catalyses diphosphate + H2O = 2 phosphate + H(+). This Schizosaccharomyces pombe (strain 972 / ATCC 24843) (Fission yeast) protein is Inorganic pyrophosphatase (ppa1).